The sequence spans 155 residues: Ribosomal RNA large subunit methyltransferase H (155 aa).

S-adenosyl-L-methionine contacts are provided by residues leucine 72, glycine 103, and 122–127; that span reads LSALTL.

It belongs to the RNA methyltransferase RlmH family. As to quaternary structure, homodimer.

The protein localises to the cytoplasm. The enzyme catalyses pseudouridine(1915) in 23S rRNA + S-adenosyl-L-methionine = N(3)-methylpseudouridine(1915) in 23S rRNA + S-adenosyl-L-homocysteine + H(+). In terms of biological role, specifically methylates the pseudouridine at position 1915 (m3Psi1915) in 23S rRNA. This Shigella boydii serotype 18 (strain CDC 3083-94 / BS512) protein is Ribosomal RNA large subunit methyltransferase H.